The primary structure comprises 1677 residues: Vitellogenin (1677 aa).

The signal sequence occupies residues 1-8 (LTIALVGS). One can recognise a Vitellogenin domain in the interval 17–655 (FSGSKTYQYK…NAASILPSAV (639 aa)). Disordered stretches follow at residues 1089-1232 (TLRG…SEEI) and 1252-1280 (FQNKRGRMSSSSSSSSSSSSQSTLNSKQD). Residues 1098–1122 (SSSSSSSSSSSSSSSSSSSSSSQQS) show a composition bias toward low complexity. The segment covering 1123 to 1145 (RMEKRMEQDKLTENLERDRDHMR) has biased composition (basic and acidic residues). The span at 1169–1196 (SSSSSSSSSSSGSNSSSSSSSSSSSSSR) shows a compositional bias: low complexity. 4 N-linked (GlcNAc...) asparagine glycosylation sites follow: N1182, N1202, N1217, and N1218. A compositionally biased stretch (basic residues) spans 1197-1212 (SHNHRNNTRTLSKSKR). Low complexity-rich tracts occupy residues 1215–1229 (NNNNSSSSSGSSSSS) and 1260–1273 (SSSSSSSSSSSSQS). The VWFD domain maps to 1490–1675 (SKCVAQENKF…TATEAASFCV (186 aa)). Disulfide bonds link C1492–C1631 and C1515–C1674. Basic and acidic residues predominate over residues 1636–1649 (GERRKEFRMPDGRQ). The segment at 1636–1659 (GERRKEFRMPDGRQARGPSVSPTP) is disordered.

In terms of processing, phosvitin, an egg yolk storage protein, is one of the most highly phosphorylated (10%) proteins in nature. As to expression, found in liver, testis and undifferentiated gonads of estrogen-treated fish. Not detected in the brain and spleen.

In terms of biological role, precursor of the major egg-yolk proteins that are sources of nutrients during early development of oviparous organisms. In Acipenser transmontanus (White sturgeon), this protein is Vitellogenin.